Consider the following 941-residue polypeptide: ATP-dependent 6-phosphofructokinase subunit beta (941 aa).

The N-terminal catalytic PFK domain 1 stretch occupies residues 2 to 558 (PDASLFNGTS…HMKNFISTNS (557 aa)). ATP-binding positions include Gly191, 255 to 256 (RC), and 285 to 288 (GDGS). Asp286 is a Mg(2+) binding site. Residues 331 to 333 (SID), Arg368, and 375 to 377 (MGR) contribute to the beta-D-fructose 6-phosphate site. Asp333 (proton acceptor) is an active-site residue. ATP is bound by residues Ile395, 400 to 405 (KPASSR), and Gln410. Beta-D-fructose 6-phosphate-binding positions include Glu432, Arg460, and 466 to 469 (HVQR). ATP is bound at residue 557–558 (NS). The interdomain linker stretch occupies residues 559–572 (ADHVPPSLPLEKRK). The C-terminal regulatory PFK domain 2 stretch occupies residues 573-941 (KIAIINVGAP…SDMLSGRTSL (369 aa)). Residues Arg643, 701 to 705 (TISNN), Arg739, 746 to 748 (QGG), Glu806, Lys832, 838 to 841 (HVQQ), and Arg918 contribute to the beta-D-fructose 2,6-bisphosphate site.

The protein belongs to the phosphofructokinase type A (PFKA) family. ATP-dependent PFK group I subfamily. Eukaryotic two domain clade 'E' sub-subfamily. In terms of assembly, heterododecamer of 4 alpha, 4 beta and 4 gamma chains. Mg(2+) is required as a cofactor.

It is found in the cytoplasm. The catalysed reaction is beta-D-fructose 6-phosphate + ATP = beta-D-fructose 1,6-bisphosphate + ADP + H(+). The protein operates within carbohydrate degradation; glycolysis; D-glyceraldehyde 3-phosphate and glycerone phosphate from D-glucose: step 3/4. Its activity is regulated as follows. Allosterically activated by ADP, AMP, or fructose 2,6-bisphosphate, and allosterically inhibited by ATP or citrate. Functionally, catalyzes the phosphorylation of D-fructose 6-phosphate to fructose 1,6-bisphosphate by ATP, the first committing step of glycolysis. The sequence is that of ATP-dependent 6-phosphofructokinase subunit beta (PFK2) from Komagataella pastoris (Yeast).